The primary structure comprises 239 residues: Ras-like protein B (239 aa).

GTP contacts are provided by residues 13–18, 29–35, 59–60, 139–142, and 169–171; these read GVGKTA, VETYDPT, AG, NKSD, and SAK. Residues 32 to 40 carry the Effector region motif; it reads YDPTIEDSY. The tract at residues 191–227 is disordered; sequence RQQQQGGRAQDRRPTGLGPMRDRDAGPEYPKTFRPDR. Residues 199 to 226 show a composition bias toward basic and acidic residues; that stretch reads AQDRRPTGLGPMRDRDAGPEYPKTFRPD.

Belongs to the small GTPase superfamily. Ras family. In terms of assembly, interacts with mpkA.

The catalysed reaction is GTP + H2O = GDP + phosphate + H(+). Its function is as follows. Ras-like protein involved in the activation of Ras protein signal transduction. Ras proteins bind GDP/GTP and possess intrinsic GTPase activity. Plays a role in hyphal morphology and conidiophore development. Required for full virulence. The sequence is that of Ras-like protein B from Aspergillus fumigatus (strain ATCC MYA-4609 / CBS 101355 / FGSC A1100 / Af293) (Neosartorya fumigata).